A 460-amino-acid chain; its full sequence is 3-isopropylmalate dehydratase large subunit (460 aa).

3 residues coordinate [4Fe-4S] cluster: Cys338, Cys398, and Cys401.

It belongs to the aconitase/IPM isomerase family. LeuC type 1 subfamily. As to quaternary structure, heterodimer of LeuC and LeuD. Requires [4Fe-4S] cluster as cofactor.

The catalysed reaction is (2R,3S)-3-isopropylmalate = (2S)-2-isopropylmalate. The protein operates within amino-acid biosynthesis; L-leucine biosynthesis; L-leucine from 3-methyl-2-oxobutanoate: step 2/4. In terms of biological role, catalyzes the isomerization between 2-isopropylmalate and 3-isopropylmalate, via the formation of 2-isopropylmaleate. The protein is 3-isopropylmalate dehydratase large subunit of Streptococcus gordonii (strain Challis / ATCC 35105 / BCRC 15272 / CH1 / DL1 / V288).